The chain runs to 308 residues: Probable peptidyl-prolyl cis-trans isomerase B (308 aa).

Residues 74–123 (DHQSTTSATPTDSASTSPPQAATAPPLPPFKPSANLGANCQYPPSPDKAV) form a disordered region. Positions 77 to 97 (STTSATPTDSASTSPPQAATA) are enriched in low complexity. Positions 139 to 307 (AQVSVSMVTN…TEVTITSVLL (169 aa)) constitute a PPIase cyclophilin-type domain.

Belongs to the cyclophilin-type PPIase family.

It carries out the reaction [protein]-peptidylproline (omega=180) = [protein]-peptidylproline (omega=0). Its function is as follows. PPIases accelerate the folding of proteins. It catalyzes the cis-trans isomerization of proline imidic peptide bonds in oligopeptides. This Mycobacterium tuberculosis (strain CDC 1551 / Oshkosh) protein is Probable peptidyl-prolyl cis-trans isomerase B (ppiB).